The following is a 230-amino-acid chain: 7-cyano-7-deazaguanine synthase (230 aa).

Residue 9–19 (YSGGLDSTTCL) coordinates ATP. The Zn(2+) site is built by C190, C200, C203, and C206.

Belongs to the QueC family. The cofactor is Zn(2+).

It carries out the reaction 7-carboxy-7-deazaguanine + NH4(+) + ATP = 7-cyano-7-deazaguanine + ADP + phosphate + H2O + H(+). Its pathway is purine metabolism; 7-cyano-7-deazaguanine biosynthesis. In terms of biological role, catalyzes the ATP-dependent conversion of 7-carboxy-7-deazaguanine (CDG) to 7-cyano-7-deazaguanine (preQ(0)). The protein is 7-cyano-7-deazaguanine synthase of Syntrophotalea carbinolica (strain DSM 2380 / NBRC 103641 / GraBd1) (Pelobacter carbinolicus).